A 446-amino-acid polypeptide reads, in one-letter code: N-succinylarginine dihydrolase (446 aa).

Substrate contacts are provided by residues 19 to 28 (AGLSFGNVAS), Asn110, and 137 to 138 (HR). Glu174 is a catalytic residue. Arg213 is a binding site for substrate. His249 is a catalytic residue. Positions 251 and 364 each coordinate substrate. The active-site Nucleophile is the Cys370.

The protein belongs to the succinylarginine dihydrolase family. Homodimer.

The enzyme catalyses N(2)-succinyl-L-arginine + 2 H2O + 2 H(+) = N(2)-succinyl-L-ornithine + 2 NH4(+) + CO2. The protein operates within amino-acid degradation; L-arginine degradation via AST pathway; L-glutamate and succinate from L-arginine: step 2/5. Functionally, catalyzes the hydrolysis of N(2)-succinylarginine into N(2)-succinylornithine, ammonia and CO(2). The chain is N-succinylarginine dihydrolase from Burkholderia ambifaria (strain MC40-6).